Here is a 21-residue protein sequence, read N- to C-terminus: Apolipophorin 2 (21 aa).

In terms of tissue distribution, expressed in hemolymph.

The protein localises to the secreted. In terms of biological role, constitutes the major component of lipophorin, which mediates transport for various types of lipids in hemolymph. Acts by forming lipoprotein particles that bind lipoproteins and lipids. The polypeptide is Apolipophorin 2 (Galleria mellonella (Greater wax moth)).